A 212-amino-acid chain; its full sequence is MSFFDKKQMITEEEALPGRNTRMPVAALHTVTGHSMTNVPEGMEVALFAMGCFWGVERLFWALPGVYSTAAGYTGGYTPNPTYREVCSGQTGHAEAVRVVYDPNVISYEQLLQVFWENHDPAQGMRQGNDVGTQYRSAIYPLTPEQEAAAQASLERFRAAMEAAGDYRHITTEIAPAKPFYYAEDEHQQYLHKNPYGYCGIGGIGVCLPPEA.

The active site involves C52.

This sequence belongs to the MsrA Met sulfoxide reductase family.

The enzyme catalyses L-methionyl-[protein] + [thioredoxin]-disulfide + H2O = L-methionyl-(S)-S-oxide-[protein] + [thioredoxin]-dithiol. The catalysed reaction is [thioredoxin]-disulfide + L-methionine + H2O = L-methionine (S)-S-oxide + [thioredoxin]-dithiol. Functionally, has an important function as a repair enzyme for proteins that have been inactivated by oxidation. Catalyzes the reversible oxidation-reduction of methionine sulfoxide in proteins to methionine. The sequence is that of Peptide methionine sulfoxide reductase MsrA from Cronobacter sakazakii (strain ATCC BAA-894) (Enterobacter sakazakii).